Here is a 126-residue protein sequence, read N- to C-terminus: Glycine cleavage system H protein (126 aa).

The region spanning 22–104 (VAYVGITDYA…YGEGWLIKMK (83 aa)) is the Lipoyl-binding domain. An N6-lipoyllysine modification is found at K63.

The protein belongs to the GcvH family. The glycine cleavage system is composed of four proteins: P, T, L and H. The cofactor is (R)-lipoate.

Functionally, the glycine cleavage system catalyzes the degradation of glycine. The H protein shuttles the methylamine group of glycine from the P protein to the T protein. This is Glycine cleavage system H protein from Bacteroides fragilis (strain ATCC 25285 / DSM 2151 / CCUG 4856 / JCM 11019 / LMG 10263 / NCTC 9343 / Onslow / VPI 2553 / EN-2).